We begin with the raw amino-acid sequence, 326 residues long: HTH-type transcriptional regulator BlaA (326 aa).

Residues 1 to 59 (MDVVNACRAFVKVSERGSFTVGAAAAQMSQSVASRRVAALEKHFGERLFDRASRRPSLT) enclose the HTH lysR-type domain. The H-T-H motif DNA-binding region spans 19-38 (FTVGAAAAQMSQSVASRRVA). A disordered region spans residues 289-326 (TADHGPDPATGAGPGADAGTEPGARAEPGAPEEGAQAC). Over residues 295–326 (DPATGAGPGADAGTEPGARAEPGAPEEGAQAC) the composition is skewed to low complexity.

This sequence belongs to the LysR transcriptional regulatory family.

Functionally, positive regulator of the expression of the gene (blaB) for beta-lactamase. It binds to the blaL-blaA intercistronic region. The protein is HTH-type transcriptional regulator BlaA (blaA) of Streptomyces cacaoi.